Here is an 87-residue protein sequence, read N- to C-terminus: MKQGIHPDYREVVFQDMSNGFKFITRSTIQTRETIELDGKTYPLAKIEVSSESHSFYTGQQKIMDTAGRVEKFKNKFGARASGKAAK.

Belongs to the bacterial ribosomal protein bL31 family. Type B subfamily. Part of the 50S ribosomal subunit.

The polypeptide is Large ribosomal subunit protein bL31B (Burkholderia thailandensis (strain ATCC 700388 / DSM 13276 / CCUG 48851 / CIP 106301 / E264)).